Consider the following 105-residue polypeptide: Mini zinc finger protein 2 (105 aa).

Residues 1 to 29 (MGPQQDRSAAKPYANGSTAAAAAAGRKEN) form a disordered region. A ZF-HD dimerization-type; degenerate zinc finger spans residues 35-84 (YRECQRNHAASIGGHAVDGCREFMASGADGTAAALLCAACGCHQSFHRRE).

Homo- and heterodimers.

The protein resides in the cytoplasm. Inhibits zinc finger homeodomain (ZHD) transcription factors, by interacting with them to prevent both their nuclear localization and their DNA-binding properties. The chain is Mini zinc finger protein 2 (MIF2) from Oryza sativa subsp. indica (Rice).